We begin with the raw amino-acid sequence, 342 residues long: Holliday junction branch migration complex subunit RuvB (342 aa).

Residues 1–179 (MTNILSPEKS…FGIPMRLNFY (179 aa)) are large ATPase domain (RuvB-L). ATP contacts are provided by residues Ile18, Arg19, Gly60, Lys63, Thr64, Thr65, 126–128 (EDF), Arg169, Tyr179, and Arg216. Residue Thr64 coordinates Mg(2+). The small ATPAse domain (RuvB-S) stretch occupies residues 180 to 250 (NTEELKQVLN…ICDFGLKRLT (71 aa)). The segment at 253 to 342 (SIGLDSNDYR…NQLNILNENE (90 aa)) is head domain (RuvB-H). Positions 289, 308, and 313 each coordinate DNA.

It belongs to the RuvB family. Homohexamer. Forms an RuvA(8)-RuvB(12)-Holliday junction (HJ) complex. HJ DNA is sandwiched between 2 RuvA tetramers; dsDNA enters through RuvA and exits via RuvB. An RuvB hexamer assembles on each DNA strand where it exits the tetramer. Each RuvB hexamer is contacted by two RuvA subunits (via domain III) on 2 adjacent RuvB subunits; this complex drives branch migration. In the full resolvosome a probable DNA-RuvA(4)-RuvB(12)-RuvC(2) complex forms which resolves the HJ.

It is found in the cytoplasm. The enzyme catalyses ATP + H2O = ADP + phosphate + H(+). In terms of biological role, participates in UV-tolerance of Synechocystis PCC 6803. The RuvA-RuvB-RuvC complex processes Holliday junction (HJ) DNA during genetic recombination and DNA repair, while the RuvA-RuvB complex plays an important role in the rescue of blocked DNA replication forks via replication fork reversal (RFR). RuvA specifically binds to HJ cruciform DNA, conferring on it an open structure. The RuvB hexamer acts as an ATP-dependent pump, pulling dsDNA into and through the RuvAB complex. RuvB forms 2 homohexamers on either side of HJ DNA bound by 1 or 2 RuvA tetramers; 4 subunits per hexamer contact DNA at a time. Coordinated motions by a converter formed by DNA-disengaged RuvB subunits stimulates ATP hydrolysis and nucleotide exchange. Immobilization of the converter enables RuvB to convert the ATP-contained energy into a lever motion, pulling 2 nucleotides of DNA out of the RuvA tetramer per ATP hydrolyzed, thus driving DNA branch migration. The RuvB motors rotate together with the DNA substrate, which together with the progressing nucleotide cycle form the mechanistic basis for DNA recombination by continuous HJ branch migration. Branch migration allows RuvC to scan DNA until it finds its consensus sequence, where it cleaves and resolves cruciform DNA. The sequence is that of Holliday junction branch migration complex subunit RuvB from Rickettsia prowazekii (strain Madrid E).